A 161-amino-acid chain; its full sequence is Nucleotide-binding protein Ajs_2750 (161 aa).

It belongs to the YajQ family.

Nucleotide-binding protein. The sequence is that of Nucleotide-binding protein Ajs_2750 from Acidovorax sp. (strain JS42).